Reading from the N-terminus, the 386-residue chain is Pepsin A (386 aa).

The first 15 residues, 1 to 15 (MKWLLLISLVALSEC), serve as a signal peptide directing secretion. The propeptide at 16–60 (AIVKVPLVRKKSLRQNLIEHGLLNDFLKNQSPNPASKYFPQEPTV) is activation peptide. The Peptidase A1 domain occupies 74–383 (YFGTIGIGTP…DRANNQVGLA (310 aa)). The active site involves aspartate 92. 2 disulfide bridges follow: cysteine 105–cysteine 110 and cysteine 266–cysteine 270. Residue aspartate 275 is part of the active site. The cysteines at positions 309 and 342 are disulfide-linked.

This sequence belongs to the peptidase A1 family.

It is found in the secreted. It catalyses the reaction Preferential cleavage: hydrophobic, preferably aromatic, residues in P1 and P1' positions. Cleaves 1-Phe-|-Val-2, 4-Gln-|-His-5, 13-Glu-|-Ala-14, 14-Ala-|-Leu-15, 15-Leu-|-Tyr-16, 16-Tyr-|-Leu-17, 23-Gly-|-Phe-24, 24-Phe-|-Phe-25 and 25-Phe-|-Tyr-26 bonds in the B chain of insulin.. In terms of biological role, shows particularly broad specificity; although bonds involving phenylalanine and leucine are preferred, many others are also cleaved to some extent. The protein is Pepsin A (PGA) of Canis lupus familiaris (Dog).